We begin with the raw amino-acid sequence, 444 residues long: Na(+)/H(+) antiporter NhaA (444 aa).

Transmembrane regions (helical) follow at residues 27–47 (TTGLMLMLMTVVALLLANSPL), 72–92 (IHHWINDGLMAIFFFIIGLEI), 108–128 (MLPILAAIGGMALPALIYYAI), 136–156 (AGWGIPMATDIAFAISALVLL), 167–187 (FLVALAIVDDLGAVVVIALFY), 190–210 (EINMLPLLFAFISFLVLVSFN), 212–232 (FGIHAILPYFVVGFIMWLFML), 312–332 (HLPVSLVVIPLFALANAGVSI), 349–369 (VMAGLVFGKVFGIAGISYLAI), 385–405 (VFGVAFLGGIGFTMSIFIAEL), and 419–439 (IGILAASLFAGIFGFIWLRFI).

It belongs to the NhaA Na(+)/H(+) (TC 2.A.33) antiporter family.

It is found in the cell inner membrane. It carries out the reaction Na(+)(in) + 2 H(+)(out) = Na(+)(out) + 2 H(+)(in). Functionally, na(+)/H(+) antiporter that extrudes sodium in exchange for external protons. This chain is Na(+)/H(+) antiporter NhaA, found in Sulfurimonas denitrificans (strain ATCC 33889 / DSM 1251) (Thiomicrospira denitrificans (strain ATCC 33889 / DSM 1251)).